Consider the following 725-residue polypeptide: 1,4-alpha-glucan branching enzyme GlgB (725 aa).

Asp403 acts as the Nucleophile in catalysis. The active-site Proton donor is the Glu456.

The protein belongs to the glycosyl hydrolase 13 family. GlgB subfamily. In terms of assembly, monomer.

The catalysed reaction is Transfers a segment of a (1-&gt;4)-alpha-D-glucan chain to a primary hydroxy group in a similar glucan chain.. Its pathway is glycan biosynthesis; glycogen biosynthesis. Functionally, catalyzes the formation of the alpha-1,6-glucosidic linkages in glycogen by scission of a 1,4-alpha-linked oligosaccharide from growing alpha-1,4-glucan chains and the subsequent attachment of the oligosaccharide to the alpha-1,6 position. The protein is 1,4-alpha-glucan branching enzyme GlgB of Pectobacterium atrosepticum (strain SCRI 1043 / ATCC BAA-672) (Erwinia carotovora subsp. atroseptica).